The sequence spans 875 residues: Alanine--tRNA ligase (875 aa).

4 residues coordinate Zn(2+): H564, H568, C666, and H670.

It belongs to the class-II aminoacyl-tRNA synthetase family. Homotetramer. The cofactor is Zn(2+).

The protein resides in the cytoplasm. The enzyme catalyses tRNA(Ala) + L-alanine + ATP = L-alanyl-tRNA(Ala) + AMP + diphosphate. In terms of biological role, catalyzes the attachment of alanine to tRNA(Ala) in a two-step reaction: alanine is first activated by ATP to form Ala-AMP and then transferred to the acceptor end of tRNA(Ala). Also edits incorrectly charged Ser-tRNA(Ala) and Gly-tRNA(Ala) via its editing domain. The sequence is that of Alanine--tRNA ligase from Yersinia pestis bv. Antiqua (strain Angola).